Reading from the N-terminus, the 204-residue chain is Tetraspanin-13 (204 aa).

Topologically, residues 1-19 (MVCGGFSCSKNCLCALNLL) are cytoplasmic. A helical transmembrane segment spans residues 20-40 (YTLVSLLLIGIAAWGIGFGLI). The Extracellular segment spans residues 41–44 (SSLR). A helical membrane pass occupies residues 45–65 (VVGVVIAVGIFLFLIALVGLI). At 66 to 72 (GAVKHHQ) the chain is on the cytoplasmic side. Residues 73–93 (VLLFFYMIILLLVFIVQFSVS) form a helical membrane-spanning segment. The Extracellular portion of the chain corresponds to 94 to 167 (CACLALNREQ…IGEYAGEVLR (74 aa)). 2 N-linked (GlcNAc...) asparagine glycosylation sites follow: Asn-113 and Asn-137. Ser-143 is modified (phosphoserine). A helical membrane pass occupies residues 168-188 (FVGGIGLFFSFTEILGVWLTY). Residues 189-204 (RYRNQKDPRANPSAFL) lie on the Cytoplasmic side of the membrane.

It belongs to the tetraspanin (TM4SF) family.

The protein resides in the membrane. The sequence is that of Tetraspanin-13 (Tspan13) from Rattus norvegicus (Rat).